The primary structure comprises 822 residues: Microcephalin (822 aa).

One can recognise a BRCT 1 domain in the interval 10–99 (AFLKDVVAYV…ALVDESLFPA (90 aa)). Disordered regions lie at residues 182 to 203 (MKEKRENLSPTSSQMLEQSQQN), 219 to 243 (PLSSDESFASGSHSSFGDSCGDQER), and 266 to 295 (SSFYGSASPNHLRQPRPQKAPDSPSKESIN). Polar residues-rich tracts occupy residues 189 to 203 (LSPTSSQMLEQSQQN) and 219 to 235 (PLSSDESFASGSHSSFG). S273, S290, and S327 each carry phosphoserine. T329 is subject to Phosphothreonine. Disordered stretches follow at residues 335–366 (EHQVRLGPKNSSAKRKRAADLGSSPKGKLKKR), 498–567 (NDSP…SPED), and 594–636 (TGYS…PTRT). Polar residues predominate over residues 522 to 541 (HPDTLSSSAHHITPLKGNST). 2 stretches are compositionally biased toward basic and acidic residues: residues 542 to 553 (ETRDPGDGKGSP) and 625 to 634 (KKSEKEEKPT). BRCT domains are found at residues 627 to 717 (SEKE…PFEL) and 738 to 820 (YQGT…NYQL).

As to quaternary structure, interacts with CDC27 and maybe other components of the APC/C complex. Interacts with histone variant H2AX under DNA damage conditions. As to expression, high levels of expression are found in the developing forebrain and, in particular, in the walls of the lateral ventricles.

It localises to the cytoplasm. The protein resides in the cytoskeleton. It is found in the microtubule organizing center. The protein localises to the centrosome. In terms of biological role, implicated in chromosome condensation and DNA damage induced cellular responses. May play a role in neurogenesis and regulation of the size of the cerebral cortex. This Mus musculus (Mouse) protein is Microcephalin.